The following is a 226-amino-acid chain: Uridylate kinase (226 aa).

9 to 10 is a binding site for ATP; it reads GS. Gly-46 is a UMP binding site. ATP-binding residues include Gly-47 and Arg-51. UMP-binding positions include Asp-68 and 116 to 122; that span reads THPGHTT. ATP is bound by residues Thr-142, Asn-143, Tyr-148, and Asp-151.

This sequence belongs to the UMP kinase family. Homohexamer.

It is found in the cytoplasm. The enzyme catalyses UMP + ATP = UDP + ADP. Its pathway is pyrimidine metabolism; CTP biosynthesis via de novo pathway; UDP from UMP (UMPK route): step 1/1. Its activity is regulated as follows. Inhibited by UTP. Functionally, catalyzes the reversible phosphorylation of UMP to UDP. The chain is Uridylate kinase from Methanocaldococcus jannaschii (strain ATCC 43067 / DSM 2661 / JAL-1 / JCM 10045 / NBRC 100440) (Methanococcus jannaschii).